The following is a 460-amino-acid chain: DEAD-box helicase Dbp80 (460 aa).

Ser26 bears the Phosphoserine mark. The residue at position 30 (Thr30) is a Phosphothreonine. A Q motif motif is present at residues Lys73–Glu101. One can recognise a Helicase ATP-binding domain in the interval Thr106–Ile276. Ser119–Thr126 contacts ATP. The short motif at Asp223–Asp226 is the DEAD box element. Residues Asn287–Ile455 form the Helicase C-terminal domain.

The protein belongs to the DEAD box helicase family. DDX19/DBP5 subfamily.

It is found in the cytoplasm. The protein resides in the nucleus. The protein localises to the nucleoplasm. The enzyme catalyses ATP + H2O = ADP + phosphate + H(+). ATP-dependent RNA helicase involved in mRNA export from the nucleus. This Drosophila melanogaster (Fruit fly) protein is DEAD-box helicase Dbp80 (Dbp80).